The chain runs to 424 residues: T-DNA border endonuclease VirD2 (424 aa).

Disordered stretches follow at residues Ala206–Ile269 and Arg321–Thr424. Acidic residues predominate over residues Glu212–Pro221. A compositionally biased stretch (basic and acidic residues) spans Glu243 to Phe261. A compositionally biased stretch (basic residues) spans Thr330–Arg339. Basic and acidic residues-rich tracts occupy residues Ser394–Gly408 and Asn415–Thr424.

Its function is as follows. Tumor formation by A.tumefaciens involves the transfer and integration of a defined segment (T-DNA) of Ti plasmid DNA into the plant nuclear genome. The virD operon encodes a site-specific endonuclease that cleaves at a unique site within both 24 bp direct repeats flanking the T-DNA. The chain is T-DNA border endonuclease VirD2 (virD2) from Rhizobium radiobacter (Agrobacterium tumefaciens).